The sequence spans 264 residues: tRNA (guanine-N(1)-)-methyltransferase (264 aa).

S-adenosyl-L-methionine-binding positions include G125 and L145 to L150.

It belongs to the RNA methyltransferase TrmD family. In terms of assembly, homodimer.

It is found in the cytoplasm. The catalysed reaction is guanosine(37) in tRNA + S-adenosyl-L-methionine = N(1)-methylguanosine(37) in tRNA + S-adenosyl-L-homocysteine + H(+). Specifically methylates guanosine-37 in various tRNAs. In Burkholderia ambifaria (strain MC40-6), this protein is tRNA (guanine-N(1)-)-methyltransferase.